A 281-amino-acid chain; its full sequence is MFKFFKNKQDNKKIERKIEFKEKLNSLEENVVFKIENLSLWYKKGEKQALKNVSANIAKNHVTALIGPSGCGKSTFLRELNRMNDTIEGVLTDGNIFFEGKNIKSKKLPVTFLRTRVGMVFQKPTPFPISIYDNIAYGPRSNGIHNKKVLDKIVENALKSAALWEEVKNNLKDLGTSLSGGQQQRLCIARAIAIEPHVLLMDEPTSALDPIATAKVEELILKLKDRYSIVIVTHSMSQAQRISDDTLFFYAGEIVEANKTKEIFLRPQLKRTRDYINGRIG.

An ABC transporter domain is found at Phe-33–Ile-276. Gly-67–Ser-74 is a binding site for ATP.

The protein belongs to the ABC transporter superfamily. Phosphate importer (TC 3.A.1.7) family. The complex is composed of two ATP-binding proteins (PstB), two transmembrane proteins (PstC and PstA) and a solute-binding protein (PstS).

The protein localises to the cell membrane. The catalysed reaction is phosphate(out) + ATP + H2O = ADP + 2 phosphate(in) + H(+). Its function is as follows. Part of the ABC transporter complex PstSACB involved in phosphate import. Responsible for energy coupling to the transport system. The chain is Phosphate import ATP-binding protein PstB from Mycoplasma mobile (strain ATCC 43663 / 163K / NCTC 11711) (Mesomycoplasma mobile).